We begin with the raw amino-acid sequence, 301 residues long: Homoserine O-acetyltransferase (301 aa).

Cysteine 142 serves as the catalytic Acyl-thioester intermediate. Positions 163 and 192 each coordinate substrate. Histidine 235 functions as the Proton acceptor in the catalytic mechanism. Residue glutamate 237 is part of the active site. Arginine 249 lines the substrate pocket.

It belongs to the MetA family.

The protein resides in the cytoplasm. The enzyme catalyses L-homoserine + acetyl-CoA = O-acetyl-L-homoserine + CoA. It participates in amino-acid biosynthesis; L-methionine biosynthesis via de novo pathway; O-acetyl-L-homoserine from L-homoserine: step 1/1. Its function is as follows. Transfers an acetyl group from acetyl-CoA to L-homoserine, forming acetyl-L-homoserine. This Lachnoclostridium phytofermentans (strain ATCC 700394 / DSM 18823 / ISDg) (Clostridium phytofermentans) protein is Homoserine O-acetyltransferase.